Consider the following 34-residue polypeptide: MSDINVIRAPLLILSILPCVGDDIEVLRRGEGLS.

A propeptide spanning residues 1–10 is cleaved from the precursor; the sequence is MSDINVIRAP. The segment at residues 11 to 18 is a cross-link (cyclopeptide (Leu-Pro)); it reads LLILSILP. Residues 19–34 constitute a propeptide that is removed on maturation; that stretch reads CVGDDIEVLRRGEGLS.

This sequence belongs to the MSDIN fungal toxin family. In terms of processing, processed by the macrocyclase-peptidase enzyme POPB to yield a toxic cyclic octapeptide. POPB first removes 10 residues from the N-terminus. Conformational trapping of the remaining peptide forces the enzyme to release this intermediate rather than proceed to macrocyclization. The enzyme rebinds the remaining peptide in a different conformation and catalyzes macrocyclization of the N-terminal 8 residues. In terms of tissue distribution, expressed in basidiocarps.

Probable toxin that belongs to the MSDIN-like toxin family responsible for a large number of food poisoning cases and deaths. This is MSDIN-like toxin proprotein 3 from Amanita exitialis (Guangzhou destroying angel).